The sequence spans 207 residues: ATP-dependent Clp protease proteolytic subunit (207 aa).

Catalysis depends on serine 111, which acts as the Nucleophile. The active site involves histidine 136.

It belongs to the peptidase S14 family. Fourteen ClpP subunits assemble into 2 heptameric rings which stack back to back to give a disk-like structure with a central cavity, resembling the structure of eukaryotic proteasomes.

The protein resides in the cytoplasm. The enzyme catalyses Hydrolysis of proteins to small peptides in the presence of ATP and magnesium. alpha-casein is the usual test substrate. In the absence of ATP, only oligopeptides shorter than five residues are hydrolyzed (such as succinyl-Leu-Tyr-|-NHMec, and Leu-Tyr-Leu-|-Tyr-Trp, in which cleavage of the -Tyr-|-Leu- and -Tyr-|-Trp bonds also occurs).. In terms of biological role, cleaves peptides in various proteins in a process that requires ATP hydrolysis. Has a chymotrypsin-like activity. Plays a major role in the degradation of misfolded proteins. This chain is ATP-dependent Clp protease proteolytic subunit, found in Photorhabdus laumondii subsp. laumondii (strain DSM 15139 / CIP 105565 / TT01) (Photorhabdus luminescens subsp. laumondii).